The primary structure comprises 124 residues: uncharacterized protein (124 aa).

It localises to the plastid. The protein resides in the chloroplast. This is an uncharacterized protein from Chlamydomonas reinhardtii (Chlamydomonas smithii).